The sequence spans 596 residues: Elongation factor 4 (596 aa).

One can recognise a tr-type G domain in the interval 2 to 183; it reads NNIRNFSIIA…TIIRKIPPPK (182 aa). GTP contacts are provided by residues 14 to 19 and 130 to 133; these read DHGKST and NKID.

Belongs to the TRAFAC class translation factor GTPase superfamily. Classic translation factor GTPase family. LepA subfamily.

Its subcellular location is the cell inner membrane. It catalyses the reaction GTP + H2O = GDP + phosphate + H(+). Its function is as follows. Required for accurate and efficient protein synthesis under certain stress conditions. May act as a fidelity factor of the translation reaction, by catalyzing a one-codon backward translocation of tRNAs on improperly translocated ribosomes. Back-translocation proceeds from a post-translocation (POST) complex to a pre-translocation (PRE) complex, thus giving elongation factor G a second chance to translocate the tRNAs correctly. Binds to ribosomes in a GTP-dependent manner. In Campylobacter fetus subsp. fetus (strain 82-40), this protein is Elongation factor 4.